The sequence spans 108 residues: Cuticle protein AM1199 (108 aa).

Pyrrolidone carboxylic acid is present on Gln1. The 66-residue stretch at 26 to 91 folds into the Chitin-binding type R&amp;R domain; it reads DGNFGYDFET…AESPLIPTPH (66 aa). Residue Thr89 is glycosylated (O-linked (HexNAc) threonine).

As to expression, arthrodial membrane.

The chain is Cuticle protein AM1199 from Cancer pagurus (Rock crab).